We begin with the raw amino-acid sequence, 132 residues long: MRAFLEEFKNFISRGNALDLAVGVVIGGAFGKIVTSFVADLFTPVLGLMIGGVNFQHLAWEIGGSPEDPVTINYGSFLQAVFDFVIIAFAIFLLVKAINTLQRKEEESPPTLPPPEVVLLTEIRDILNRHSQ.

The next 2 membrane-spanning stretches (helical) occupy residues 11 to 31 (FISR…GAFG) and 75 to 95 (GSFL…FLLV).

The protein belongs to the MscL family. As to quaternary structure, homopentamer.

It is found in the cell inner membrane. Its function is as follows. Channel that opens in response to stretch forces in the membrane lipid bilayer. May participate in the regulation of osmotic pressure changes within the cell. This is Large-conductance mechanosensitive channel from Synechococcus sp. (strain JA-2-3B'a(2-13)) (Cyanobacteria bacterium Yellowstone B-Prime).